Consider the following 714-residue polypeptide: Polyribonucleotide nucleotidyltransferase (714 aa).

Residues Asp-490 and Asp-496 each coordinate Mg(2+). Residues 556-615 form the KH domain; it reads PRIETMQIPTDKIREVIGSGGKVIREIVEVSGAKVDINDDGIIKIASPNGDSIKKAYDMI. An S1 motif domain is found at 625–693; it reads GQVYTGKVVK…DRGKVRLSMK (69 aa).

This sequence belongs to the polyribonucleotide nucleotidyltransferase family. It depends on Mg(2+) as a cofactor.

The protein resides in the cytoplasm. The catalysed reaction is RNA(n+1) + phosphate = RNA(n) + a ribonucleoside 5'-diphosphate. Functionally, involved in mRNA degradation. Catalyzes the phosphorolysis of single-stranded polyribonucleotides processively in the 3'- to 5'-direction. The protein is Polyribonucleotide nucleotidyltransferase of Ruegeria pomeroyi (strain ATCC 700808 / DSM 15171 / DSS-3) (Silicibacter pomeroyi).